We begin with the raw amino-acid sequence, 1172 residues long: DNA-directed RNA polymerase subunit beta (1172 aa).

This sequence belongs to the RNA polymerase beta chain family. As to quaternary structure, the RNAP catalytic core consists of 2 alpha, 1 beta, 1 beta' and 1 omega subunit. When a sigma factor is associated with the core the holoenzyme is formed, which can initiate transcription.

It carries out the reaction RNA(n) + a ribonucleoside 5'-triphosphate = RNA(n+1) + diphosphate. Its function is as follows. DNA-dependent RNA polymerase catalyzes the transcription of DNA into RNA using the four ribonucleoside triphosphates as substrates. The chain is DNA-directed RNA polymerase subunit beta from Thermosipho melanesiensis (strain DSM 12029 / CIP 104789 / BI429).